The sequence spans 237 residues: Pyrimidine 5'-nucleotidase PynA (237 aa).

Asp9 functions as the Nucleophile in the catalytic mechanism. Residues Asp9, Asp11, and Asp181 each contribute to the Mg(2+) site. The Proton donor role is filled by Asp11.

It belongs to the HAD-like hydrolase superfamily. YjjG family. In terms of assembly, homodimer. Requires Mg(2+) as cofactor. It depends on Mn(2+) as a cofactor.

The protein resides in the cytoplasm. It carries out the reaction a ribonucleoside 5'-phosphate + H2O = a ribonucleoside + phosphate. Its function is as follows. Nucleotidase that shows high phosphatase activity toward non-canonical pyrimidine nucleotides and three canonical nucleoside 5'-monophosphates (UMP, dUMP and dTMP), and no activity against IMP, UDP, GMP, AMP, UTP or pNPP. Appears to function as a house-cleaning nucleotidase in vivo, since the general nucleotidase activity of it allows it to protect cells against non-canonical pyrimidine derivatives such as 5-fluoro-2'-deoxyuridine monophosphate (5-FdUMP), and prevents the incorporation of potentially mutagenic nucleotides such as 5-bromo-2'-deoxyuridine (5-BrdU) into DNA. Is strictly specific to pyrimidine substrates with 5'-monophosphates and shows no activity against nucleoside di- and triphosphates. The protein is Pyrimidine 5'-nucleotidase PynA of Streptococcus pneumoniae (strain ATCC BAA-255 / R6).